The following is a 155-amino-acid chain: Small ribosomal subunit protein uS7cz/uS7cy (155 aa).

It belongs to the universal ribosomal protein uS7 family. Part of the 30S ribosomal subunit.

The protein resides in the plastid. The protein localises to the chloroplast. One of the primary rRNA binding proteins, it binds directly to 16S rRNA where it nucleates assembly of the head domain of the 30S subunit. The protein is Small ribosomal subunit protein uS7cz/uS7cy (rps7-A) of Daucus carota (Wild carrot).